Consider the following 511-residue polypeptide: Protein phosphatase 2C 7 (511 aa).

The signal sequence occupies residues 1 to 19 (MEEISPAVALTLGLANTMC). The PPM-type phosphatase domain occupies 188–501 (LWGTISICGG…DNISIIVIDL (314 aa)). Aspartate 242, glycine 243, aspartate 432, and aspartate 492 together coordinate Mn(2+).

The protein belongs to the PP2C family. In terms of assembly, interacts with PYL13. Mg(2+) serves as cofactor. It depends on Mn(2+) as a cofactor. Expressed in seeds.

It catalyses the reaction O-phospho-L-seryl-[protein] + H2O = L-seryl-[protein] + phosphate. The catalysed reaction is O-phospho-L-threonyl-[protein] + H2O = L-threonyl-[protein] + phosphate. In terms of biological role, key component and repressor of the abscisic acid (ABA) signaling pathway that regulates numerous ABA responses, such as stomatal closure, seed germination and inhibition of vegetative growth. This chain is Protein phosphatase 2C 7 (HAB2), found in Arabidopsis thaliana (Mouse-ear cress).